The chain runs to 291 residues: Phosphate import ATP-binding protein PstB (291 aa).

The segment covering 1–17 (MANTNVKEKELAKHTDQ) has biased composition (basic and acidic residues). A disordered region spans residues 1-40 (MANTNVKEKELAKHTDQSQESISTVVSSNEVKHNKESDSN). The segment covering 18 to 29 (SQESISTVVSSN) has biased composition (polar residues). Over residues 30 to 40 (EVKHNKESDSN) the composition is skewed to basic and acidic residues. The ABC transporter domain occupies 45-286 (YSTQNLDLWY…PSDKQTEDYI (242 aa)). Position 77–84 (77–84 (GPSGCGKS)) interacts with ATP.

It belongs to the ABC transporter superfamily. Phosphate importer (TC 3.A.1.7) family. In terms of assembly, the complex is composed of two ATP-binding proteins (PstB), two transmembrane proteins (PstC and PstA) and a solute-binding protein (PstS).

The protein resides in the cell membrane. The catalysed reaction is phosphate(out) + ATP + H2O = ADP + 2 phosphate(in) + H(+). Its function is as follows. Part of the ABC transporter complex PstSACB involved in phosphate import. Responsible for energy coupling to the transport system. The chain is Phosphate import ATP-binding protein PstB from Staphylococcus haemolyticus (strain JCSC1435).